Here is a 289-residue protein sequence, read N- to C-terminus: ATP synthase gamma chain (289 aa).

It belongs to the ATPase gamma chain family. In terms of assembly, F-type ATPases have 2 components, CF(1) - the catalytic core - and CF(0) - the membrane proton channel. CF(1) has five subunits: alpha(3), beta(3), gamma(1), delta(1), epsilon(1). CF(0) has three main subunits: a, b and c.

The protein localises to the cell inner membrane. Produces ATP from ADP in the presence of a proton gradient across the membrane. The gamma chain is believed to be important in regulating ATPase activity and the flow of protons through the CF(0) complex. The sequence is that of ATP synthase gamma chain from Azobacteroides pseudotrichonymphae genomovar. CFP2.